A 447-amino-acid chain; its full sequence is Asparagine--tRNA ligase (447 aa).

It belongs to the class-II aminoacyl-tRNA synthetase family. In terms of assembly, homodimer.

The protein localises to the cytoplasm. The catalysed reaction is tRNA(Asn) + L-asparagine + ATP = L-asparaginyl-tRNA(Asn) + AMP + diphosphate + H(+). In Lactococcus lactis subsp. lactis (strain IL1403) (Streptococcus lactis), this protein is Asparagine--tRNA ligase.